Consider the following 196-residue polypeptide: ATP-dependent Clp protease proteolytic subunit (196 aa).

Serine 101 (nucleophile) is an active-site residue. Histidine 126 is a catalytic residue.

Belongs to the peptidase S14 family. In terms of assembly, component of the chloroplastic Clp protease core complex.

The protein localises to the plastid. It localises to the chloroplast stroma. It catalyses the reaction Hydrolysis of proteins to small peptides in the presence of ATP and magnesium. alpha-casein is the usual test substrate. In the absence of ATP, only oligopeptides shorter than five residues are hydrolyzed (such as succinyl-Leu-Tyr-|-NHMec, and Leu-Tyr-Leu-|-Tyr-Trp, in which cleavage of the -Tyr-|-Leu- and -Tyr-|-Trp bonds also occurs).. Cleaves peptides in various proteins in a process that requires ATP hydrolysis. Has a chymotrypsin-like activity. Plays a major role in the degradation of misfolded proteins. The protein is ATP-dependent Clp protease proteolytic subunit of Pleurastrum terricola (Filamentous green alga).